Reading from the N-terminus, the 362-residue chain is Cobalt-precorrin-5B C(1)-methyltransferase (362 aa).

This sequence belongs to the CbiD family.

The enzyme catalyses Co-precorrin-5B + S-adenosyl-L-methionine = Co-precorrin-6A + S-adenosyl-L-homocysteine. It participates in cofactor biosynthesis; adenosylcobalamin biosynthesis; cob(II)yrinate a,c-diamide from sirohydrochlorin (anaerobic route): step 6/10. Its function is as follows. Catalyzes the methylation of C-1 in cobalt-precorrin-5B to form cobalt-precorrin-6A. This chain is Cobalt-precorrin-5B C(1)-methyltransferase, found in Burkholderia multivorans (strain ATCC 17616 / 249).